The sequence spans 146 residues: Large-conductance mechanosensitive channel (146 aa).

3 consecutive transmembrane segments (helical) span residues 17–37 (IDLAVGVIIGGAFGKIVDSLV), 40–60 (IIMPLITVITGGGVDFTQKFV), and 89–109 (LTILINFIILAWVVFLMVKLI).

It belongs to the MscL family. Homopentamer.

It is found in the cell inner membrane. In terms of biological role, channel that opens in response to stretch forces in the membrane lipid bilayer. May participate in the regulation of osmotic pressure changes within the cell. This Acinetobacter baylyi (strain ATCC 33305 / BD413 / ADP1) protein is Large-conductance mechanosensitive channel.